Consider the following 470-residue polypeptide: Cysteine--tRNA ligase 1 (470 aa).

Zn(2+) is bound at residue cysteine 29. Positions proline 31–asparagine 41 match the 'HIGH' region motif. Positions 221, 246, and 250 each coordinate Zn(2+). Positions lysine 279–serine 283 match the 'KMSKS' region motif. Lysine 282 contacts ATP.

Belongs to the class-I aminoacyl-tRNA synthetase family. In terms of assembly, monomer. Zn(2+) serves as cofactor.

It localises to the cytoplasm. It carries out the reaction tRNA(Cys) + L-cysteine + ATP = L-cysteinyl-tRNA(Cys) + AMP + diphosphate. This chain is Cysteine--tRNA ligase 1, found in Burkholderia lata (strain ATCC 17760 / DSM 23089 / LMG 22485 / NCIMB 9086 / R18194 / 383).